We begin with the raw amino-acid sequence, 441 residues long: Bacteria-responsive protein 1 (441 aa).

The signal sequence occupies residues Met-1–Ala-18. Asn-20 carries N-linked (GlcNAc...) asparagine glycosylation. The GH18 domain maps to Pro-25 to Leu-441. A disulfide bridge connects residues Cys-29 and Cys-56. N-linked (GlcNAc...) asparagine glycosylation is present at Asn-225.

Belongs to the glycosyl hydrolase 18 family. IDGF subfamily. As to expression, salivary gland (at protein level).

The protein resides in the secreted. Its function is as follows. Promotes recruitment of host neutrophils at the bite site. Induces expression of IL1B and IL6 in the skin of the host. Functionally, (Microbial infection) Enhances Zika virus replication and exacerbates disease pathogenesis in the host. The polypeptide is Bacteria-responsive protein 1 (Aedes aegypti (Yellowfever mosquito)).